The following is a 449-amino-acid chain: Glutamate--tRNA ligase 2 (449 aa).

The short motif at 17-27 (PSPTGFLHVGN) is the 'HIGH' region element. The short motif at 248-252 (ALSKR) is the 'KMSKS' region element. Lys-251 is a binding site for ATP.

This sequence belongs to the class-I aminoacyl-tRNA synthetase family. Glutamate--tRNA ligase type 1 subfamily. Monomer.

The protein resides in the cytoplasm. The catalysed reaction is tRNA(Glu) + L-glutamate + ATP = L-glutamyl-tRNA(Glu) + AMP + diphosphate. Functionally, catalyzes the attachment of glutamate to tRNA(Glu) in a two-step reaction: glutamate is first activated by ATP to form Glu-AMP and then transferred to the acceptor end of tRNA(Glu). The protein is Glutamate--tRNA ligase 2 of Jannaschia sp. (strain CCS1).